Here is a 437-residue protein sequence, read N- to C-terminus: MAGGIKVSVWSAVGPGPRCWGAGGGGGATWLLLVVAGCVVCGSADVNVVMLQESQVDMNSSQQFCYKNVLIPKWHDIWTRIQVRVNSSKLVRVTQVDNEEKLKELEQFSIWNFFSSFLKEKLNDTYVNVGLYSTKTCLKVEMIEKDTTYSVTVTRRFDPKLFLVFLLGLTLFFCGDLLSRSQIFYYSTGMSVGIVASLLIVIFMISKFMPKRSPIYVILVGGWSFSLYLIQLVFKNLQEIWRSYWHYLLSYILTVGFMSFAVCYKYGPLENERSINLLTWTLQLLGLGLMYSSIQIPHVAFALIVIALCTKNLEYPIHWLCSTYRRMCKASGKPVPPRLLTEEEYRIQGEVETQKALQELREFCNSPECSAWKTISRIQSPKRFADFVEGSFHLTPNEVSVHEQEYGLGSIFTQDEELSSEEEGSEYPTFTQNNFLT.

The N-terminal stretch at methionine 1–alanine 44 is a signal peptide. Asparagine 123 is a glycosylation site (N-linked (GlcNAc...) asparagine). Helical transmembrane passes span proline 159 to serine 179, isoleucine 183 to phenylalanine 203, proline 214 to phenylalanine 234, tyrosine 244 to tyrosine 264, and glycine 288 to leucine 308. The interval phenylalanine 184–glutamine 295 is a; required for its colocalization with lamins at the nuclear envelope. The b; required for interaction with RAN-GTP stretch occupies residues proline 334–glutamate 403. The tract at residues proline 334–threonine 437 is required for nuclear localization. Phosphoserine occurs at positions 366, 419, and 420. Acidic residues predominate over residues aspartate 415 to serine 425. Positions aspartate 415–threonine 437 are disordered. The span at proline 428–threonine 437 shows a compositional bias: polar residues.

This sequence belongs to the NEMP family. As to quaternary structure, homooligomer. Interacts with RAN-GTP. Interacts with EMD. Phosphorylated. Phosphorylation may regulate its interaction with RAN-GTP. As to expression, in the ovary, expression is strongest in primordial follicle oocytes and rapidly declines as oocytes mature and move from the cortex (at protein level).

It is found in the nucleus inner membrane. The protein localises to the nucleus envelope. Together with EMD, contributes to nuclear envelope stiffness in germ cells. Required for female fertility. Essential for normal erythropoiesis. Required for efficient nuclear envelope opening and enucleation during the late stages of erythroblast maturation. The protein is Nuclear envelope integral membrane protein 1 (Nemp1) of Mus musculus (Mouse).